A 398-amino-acid polypeptide reads, in one-letter code: uncharacterized protein (398 aa).

10 helical membrane passes run 43 to 65 (PILPMLITSVGGGSLSIGLVGGL), 89 to 108 (IFVVLGYLTSSMFKLLLGLS), 156 to 173 (TAGAILGSTLSLLFILYL), 180 to 198 (IILIAAVIGFLTLIPLYFV), 224 to 246 (LFILISAIFTLSNFSYMFYILRA), 259 to 281 (IIIPIALYILYNIFYATFSIPFG), 291 to 311 (SVLTIGYIVYGIVSLGFAYFI), 316 to 338 (LILLFALYGIAYALFAGNQKAYV), 351 to 373 (LGLFYTVVGLTSLPASLIAGYLW), and 380 to 397 (TFLYGSVLAIISGLLLLF).

Belongs to the major facilitator superfamily.

The protein resides in the cell membrane. This is an uncharacterized protein from Methanocaldococcus jannaschii (strain ATCC 43067 / DSM 2661 / JAL-1 / JCM 10045 / NBRC 100440) (Methanococcus jannaschii).